Here is a 624-residue protein sequence, read N- to C-terminus: APC membrane recruitment protein 2 (624 aa).

5 disordered regions span residues 77 to 111, 126 to 177, 195 to 230, 342 to 369, and 397 to 588; these read EEPC…SVAK, ENVK…GLIL, PLCE…PLNG, ADQD…SKKN, and FSMI…ELPR. Residues 102–111 show a composition bias toward low complexity; the sequence is DVSSDSSVAK. Basic and acidic residues-rich tracts occupy residues 155–168 and 195–204; these read SKKD…KEGA and PLCEKEKSEE. A compositionally biased stretch (low complexity) spans 352–363; it reads KGSKVVPGNGKK. Basic and acidic residues-rich tracts occupy residues 422–435 and 450–469; these read REVK…DRNT and ERGD…RNSD.

The protein belongs to the Amer family.

It localises to the cell membrane. Negative regulator of the canonical Wnt signaling pathway involved in neuroectodermal patterning. Acts by specifically binding phosphatidylinositol 4,5-bisphosphate (PtdIns(4,5)P2), translocating to the cell membrane and interacting with key regulators of the canonical Wnt signaling pathway, such as components of the beta-catenin destruction complex. This is APC membrane recruitment protein 2 (amer2) from Xenopus laevis (African clawed frog).